Here is a 430-residue protein sequence, read N- to C-terminus: 3-phosphoshikimate 1-carboxyvinyltransferase (430 aa).

3-phosphoshikimate contacts are provided by Lys25, Ser26, and Arg30. Residue Lys25 coordinates phosphoenolpyruvate. Residues Gly98 and Arg126 each coordinate phosphoenolpyruvate. Residues Ser169, Ser170, Gln171, Ser198, Glu313, and His342 each contribute to the 3-phosphoshikimate site. Residue Gln171 participates in phosphoenolpyruvate binding. The active-site Proton acceptor is Glu313. Phosphoenolpyruvate-binding residues include Arg346, Arg387, and Lys412.

Belongs to the EPSP synthase family. Monomer.

It localises to the cytoplasm. The enzyme catalyses 3-phosphoshikimate + phosphoenolpyruvate = 5-O-(1-carboxyvinyl)-3-phosphoshikimate + phosphate. The protein operates within metabolic intermediate biosynthesis; chorismate biosynthesis; chorismate from D-erythrose 4-phosphate and phosphoenolpyruvate: step 6/7. Catalyzes the transfer of the enolpyruvyl moiety of phosphoenolpyruvate (PEP) to the 5-hydroxyl of shikimate-3-phosphate (S3P) to produce enolpyruvyl shikimate-3-phosphate and inorganic phosphate. This chain is 3-phosphoshikimate 1-carboxyvinyltransferase, found in Mycobacterium leprae (strain TN).